Here is a 548-residue protein sequence, read N- to C-terminus: Chaperonin GroEL (548 aa).

Residues 30–33 (TLGP), Lys51, 87–91 (DGTTT), Gly415, 479–481 (NAA), and Asp495 contribute to the ATP site. The disordered stretch occupies residues 526–548 (REDKSSDVASSPAGGMGGMGGMM). Over residues 539–548 (GGMGGMGGMM) the composition is skewed to gly residues.

It belongs to the chaperonin (HSP60) family. Forms a cylinder of 14 subunits composed of two heptameric rings stacked back-to-back. Interacts with the co-chaperonin GroES.

It localises to the cytoplasm. The catalysed reaction is ATP + H2O + a folded polypeptide = ADP + phosphate + an unfolded polypeptide.. Functionally, together with its co-chaperonin GroES, plays an essential role in assisting protein folding. The GroEL-GroES system forms a nano-cage that allows encapsulation of the non-native substrate proteins and provides a physical environment optimized to promote and accelerate protein folding. The sequence is that of Chaperonin GroEL from Buchnera aphidicola subsp. Schizaphis graminum (strain Sg).